Reading from the N-terminus, the 1392-residue chain is Protein dispatched homolog 3 (1392 aa).

Residues 1-73 (MDTEDDPLLQ…LGWAFTNPCC (73 aa)) lie on the Cytoplasmic side of the membrane. A disordered region spans residues 16–40 (EEQEEEEATGETFLGAQKPGPQPGA). A helical transmembrane segment spans residues 74–94 (AGLVLFLGCSIPMALSAFMFL). Topologically, residues 95–462 (YYPPLDIDIS…YEVRRTFNND (368 aa)) are lumenal. The segment at 162–248 (GNRSRQASRA…HAAVAANQSR (87 aa)) is disordered. N-linked (GlcNAc...) asparagine glycosylation is present at Asn163. Polar residues predominate over residues 190–199 (SAAQKPTANR). Positions 457–615 (RTFNNDMLLA…LVTMPAALGL (159 aa)) constitute an SSD domain. A helical transmembrane segment spans residues 463–483 (MLLAFISSSCIAALVYILTSC). Ser484 is a topological domain (cytoplasmic). Residues 485 to 505 (VFLSFFGIASIGLSCLVALFL) traverse the membrane as a helical segment. Residues 506–508 (YHV) are Lumenal-facing. Residues 509–529 (VFGIQYLGILNGVAAFVIVGI) form a helical membrane-spanning segment. Over 530–573 (GVDDVFVFINTYRQATHLEDPQLRMIHTVQTAGKATFFTSLTTA) the chain is Cytoplasmic. Residues 574 to 594 (AAYAANVFSQIPAVHDFGLFM) traverse the membrane as a helical segment. A topological domain (lumenal) is located at residue Ser595. The chain crosses the membrane as a helical span at residues 596-616 (LIVSCCWLAVLVTMPAALGLW). The Cytoplasmic portion of the chain corresponds to 617–729 (SLYLAPLESS…WVLWSAVKSR (113 aa)). Residues 730-750 (WVIVGLFVSILILSLVFASRL) form a helical membrane-spanning segment. Residues 751-1182 (RPASRAPLLF…IFMEIVGVQS (432 aa)) lie on the Lumenal side of the membrane. A glycan (N-linked (GlcNAc...) asparagine) is linked at Asn1021. The chain crosses the membrane as a helical span at residues 1183–1203 (ALCGLVLSLLICVAAVAVFTT). A topological domain (cytoplasmic) is located at residue His1204. The chain crosses the membrane as a helical span at residues 1205–1225 (ILLLLPVLLSILGIVCLVVTI). Topologically, residues 1226–1291 (MYWSGWEMGA…TLEAVRHVGV (66 aa)) are lumenal. Residues 1292 to 1312 (AIVSSALTTVIATVPLFFCII) form a helical membrane-spanning segment. Over 1313–1320 (APFAKFGK) the chain is Cytoplasmic. A helical membrane pass occupies residues 1321-1341 (IVALNTGVSILYTLTVSTALL). The Lumenal segment spans residues 1342-1358 (GIMAPSSFTRTRTSFLK). A helical membrane pass occupies residues 1359-1379 (ALGAVLLAGALGLGACLVLLQ). The Cytoplasmic segment spans residues 1380-1392 (SGYKIPLPAGASL).

It belongs to the patched family. Expressed in brain and testis.

The protein localises to the endoplasmic reticulum membrane. It localises to the nucleus membrane. The protein resides in the cytoplasmic vesicle membrane. Plays a role in neuronal proliferation and differentiation. Plays a role in the accumulation of cellular cholesterol. Involved in intracellular lipid droplet formation. May contribute to cholesterol homeostasis in neuronal cells. The polypeptide is Protein dispatched homolog 3 (Homo sapiens (Human)).